Here is a 255-residue protein sequence, read N- to C-terminus: 4-hydroxy-tetrahydrodipicolinate reductase (255 aa).

NAD(+) is bound by residues 8–13 (GSTGRM), 88–90 (ATT), and 112–115 (SSNM). The active-site Proton donor/acceptor is His-144. His-145 serves as a coordination point for (S)-2,3,4,5-tetrahydrodipicolinate. The active-site Proton donor is Lys-148. 154–155 (GT) contributes to the (S)-2,3,4,5-tetrahydrodipicolinate binding site.

Belongs to the DapB family.

The protein localises to the cytoplasm. The catalysed reaction is (S)-2,3,4,5-tetrahydrodipicolinate + NAD(+) + H2O = (2S,4S)-4-hydroxy-2,3,4,5-tetrahydrodipicolinate + NADH + H(+). It carries out the reaction (S)-2,3,4,5-tetrahydrodipicolinate + NADP(+) + H2O = (2S,4S)-4-hydroxy-2,3,4,5-tetrahydrodipicolinate + NADPH + H(+). The protein operates within amino-acid biosynthesis; L-lysine biosynthesis via DAP pathway; (S)-tetrahydrodipicolinate from L-aspartate: step 4/4. Its function is as follows. Catalyzes the conversion of 4-hydroxy-tetrahydrodipicolinate (HTPA) to tetrahydrodipicolinate. The polypeptide is 4-hydroxy-tetrahydrodipicolinate reductase (Sulfurovum sp. (strain NBC37-1)).